The chain runs to 358 residues: Ethanol acetyltransferase 1 (358 aa).

The 108-residue stretch at 59–166 folds into the AB hydrolase-1 domain; sequence PIVFIHGLFG…NAPINQPHIS (108 aa). Active-site charge relay system residues include Ser-132, Asp-156, and His-305.

It belongs to the AB hydrolase superfamily.

It localises to the mitochondrion. The enzyme catalyses ethanol + acetyl-CoA = ethyl acetate + CoA. It catalyses the reaction acetyl-CoA + H2O = acetate + CoA + H(+). The catalysed reaction is ethyl acetate + H2O = ethanol + acetate + H(+). Alcohol acetyltransferase that catalyzes the synthesis of ethyl acetate from ethanol and acetyl-CoA. Can also function as a thioesterase by hydrolyzing acetyl-CoA in the absence of ethanol, as well as esterase hydrolyzing ethyl acetate. The chain is Ethanol acetyltransferase 1 (EAT1) from Eremothecium cymbalariae (strain CBS 270.75 / DBVPG 7215 / KCTC 17166 / NRRL Y-17582) (Yeast).